The primary structure comprises 89 residues: Small ribosomal subunit protein uS15 (89 aa).

Belongs to the universal ribosomal protein uS15 family. In terms of assembly, part of the 30S ribosomal subunit. Forms a bridge to the 50S subunit in the 70S ribosome, contacting the 23S rRNA.

Functionally, one of the primary rRNA binding proteins, it binds directly to 16S rRNA where it helps nucleate assembly of the platform of the 30S subunit by binding and bridging several RNA helices of the 16S rRNA. In terms of biological role, forms an intersubunit bridge (bridge B4) with the 23S rRNA of the 50S subunit in the ribosome. The chain is Small ribosomal subunit protein uS15 from Shewanella amazonensis (strain ATCC BAA-1098 / SB2B).